We begin with the raw amino-acid sequence, 101 residues long: UPF0473 protein STER_1939 (101 aa).

This sequence belongs to the UPF0473 family.

This chain is UPF0473 protein STER_1939, found in Streptococcus thermophilus (strain ATCC BAA-491 / LMD-9).